We begin with the raw amino-acid sequence, 402 residues long: MSKRTLASLTAADLEGKRVLVRVDFNVPLDGNGKITDDTRIRAALPTIRYLSESGAKVILVSHFGRPKGKPVESMRLTPVAERLSELLGRPVVKTTDAVGAGAEAQVAATSNGQVVLLENVRFHAEEEANDAEFAKALASLADIYVNDAFGAAHRAHASTAGVTEYLSPCVAGYLLEKELQYLQAAIDNPQRPLAAIVGGSKVSSKIGVIETLLDKCDKLLIGGGMIFTFYKAQGLSVGGSLVEEDKLDLARSLMAKAQEKGVQLLLPVDVVVADKFAPDANAKTVAIDAIPDGWMGLDIGPESVKQFEEALADCRSVIWNGPMGVFEFDQFAVGTEAIARSLAGLTRKGATTIIGGGDSVAAVEKVGVASEMSHISTGGGASLELLEGKVLPGVAALDDAA.

Substrate-binding positions include 24 to 26 (DFN), Arg40, 63 to 66 (HFGR), Arg122, and Arg155. Residues Lys206, Gly297, Glu328, and 357–360 (GGDS) contribute to the ATP site.

The protein belongs to the phosphoglycerate kinase family. Monomer.

Its subcellular location is the cytoplasm. The catalysed reaction is (2R)-3-phosphoglycerate + ATP = (2R)-3-phospho-glyceroyl phosphate + ADP. It participates in carbohydrate degradation; glycolysis; pyruvate from D-glyceraldehyde 3-phosphate: step 2/5. The protein is Phosphoglycerate kinase of Synechococcus elongatus (strain ATCC 33912 / PCC 7942 / FACHB-805) (Anacystis nidulans R2).